Consider the following 351-residue polypeptide: MFLSKPSVYICLFTCVLQLSHSWSVNNFLMTGPKAYLIYSSSVAAGAQSGIEECKYQFAWDRWNCPERALQLSSHGGLRSANRETAFVHAISSAGVMYTLTRNCSLGDFDNCGCDDSRNGQLGGQGWLWGGCSDNVGFGEAISKQFVDALETGQDARAAMNLHNNEAGRKAVKGTMKRTCKCHGVSGSCTTQTCWLQLPEFREVGAHLKEKYHAALKVDLLQGAGNSAAGRGAIADTFRSISTRELVHLEDSPDYCLENKTLGLLGTEGRECLRRGRALGRWERRSCRRLCGDCGLAVEERRAETVSSCNCKFHWCCAVRCEQCRRRVTKYFCSRAERPRGGAAHKPGRKP.

The N-terminal stretch at 1–22 (MFLSKPSVYICLFTCVLQLSHS) is a signal peptide. The cysteines at positions 54 and 65 are disulfide-linked. Asn-103 is a glycosylation site (N-linked (GlcNAc...) asparagine). 10 cysteine pairs are disulfide-bonded: Cys-104-Cys-112, Cys-114-Cys-132, Cys-180-Cys-194, Cys-182-Cys-189, Cys-256-Cys-294, Cys-272-Cys-287, Cys-291-Cys-333, Cys-309-Cys-324, Cys-311-Cys-321, and Cys-316-Cys-317. Ser-186 carries O-palmitoleoyl serine lipidation. Asn-259 is a glycosylation site (N-linked (GlcNAc...) asparagine).

It belongs to the Wnt family. In terms of processing, palmitoleoylation is required for efficient binding to frizzled receptors. Depalmitoleoylation leads to Wnt signaling pathway inhibition. Post-translationally, proteolytic processing by TIKI1 and TIKI2 promotes oxidation and formation of large disulfide-bond oligomers, leading to inactivation of WNT8B. Expression is restricted to the brain, and more specifically to the forebrain.

The protein resides in the secreted. It localises to the extracellular space. Its subcellular location is the extracellular matrix. In terms of biological role, ligand for members of the frizzled family of seven transmembrane receptors. May play an important role in the development and differentiation of certain forebrain structures, notably the hippocampus. This is Protein Wnt-8b (WNT8B) from Homo sapiens (Human).